The primary structure comprises 547 residues: Inositol 1,4,5-trisphosphate receptor-interacting protein-like 1 (547 aa).

A signal peptide spans 1-22; the sequence is MAVISLMFLAVMYVVHHPLMVS. Residues 23–96 are Extracellular-facing; the sequence is DRMDLDTLAR…PFQAGGQDGG (74 aa). Residues 28–66 are a coiled coil; the sequence is DTLARSRQLEKRMSEEMRQLEMEFEERSRAAEQKQKVEN. Residues 97-117 traverse the membrane as a helical segment; that stretch reads PLGWILGNLWNAGLFCLFLIF. Residues 118 to 547 lie on the Cytoplasmic side of the membrane; the sequence is ELLRQSMQHE…LPCSPVAGGL (430 aa).

It belongs to the ITPRIP family.

The protein resides in the cell membrane. Functionally, functions as a ligand of CD3E, inhibiting TCR-CD3 complex signaling to regulate T cell activation. Induces stable CD3E-NCK1 binding, thereby preventing the CD3E-ZAP70 interaction and subsequently inhibiting the activation of the downstream ERK-NFkB signaling cascade and calcium influx. The sequence is that of Inositol 1,4,5-trisphosphate receptor-interacting protein-like 1 (Itpripl1) from Mus musculus (Mouse).